The following is a 797-amino-acid chain: Inactive dipeptidyl peptidase 10 (797 aa).

The interval methionine 1–proline 28 is disordered. The Cytoplasmic portion of the chain corresponds to methionine 1–lysine 34. Residues glycine 35–isoleucine 55 form a helical; Signal-anchor for type II membrane protein membrane-spanning segment. Over leucine 56–glutamate 797 the chain is Extracellular. N-linked (GlcNAc...) asparagine glycosylation is found at asparagine 64, asparagine 91, asparagine 112, and asparagine 120. 2 positions are modified to phosphotyrosine: tyrosine 139 and tyrosine 144. 4 N-linked (GlcNAc...) asparagine glycosylation sites follow: asparagine 258, asparagine 343, asparagine 518, and asparagine 749.

Belongs to the peptidase S9B family. DPPIV subfamily. In terms of assembly, may form oligomers. Interacts with KCND1 and KCND2. N-glycosylation is important for cell surface expression, specially at Asn-258, which is crucial. As to expression, detected in brain cortex (at protein level). Expressed in the brain, predominantly by neurons and not by glia.

The protein resides in the cell membrane. Functionally, promotes cell surface expression of the potassium channel KCND2. Modulates the activity and gating characteristics of the potassium channel KCND2. Has no dipeptidyl aminopeptidase activity. In Mus musculus (Mouse), this protein is Inactive dipeptidyl peptidase 10 (Dpp10).